A 119-amino-acid chain; its full sequence is 5-hydroxyisourate hydrolase (119 aa).

Residues H10, R48, and Y116 each contribute to the substrate site.

It belongs to the transthyretin family. 5-hydroxyisourate hydrolase subfamily. As to quaternary structure, homotetramer.

It carries out the reaction 5-hydroxyisourate + H2O = 5-hydroxy-2-oxo-4-ureido-2,5-dihydro-1H-imidazole-5-carboxylate + H(+). The protein operates within purine metabolism; urate degradation; (S)-allantoin from urate: step 2/3. In terms of biological role, catalyzes the hydrolysis of 5-hydroxyisourate (HIU) to 2-oxo-4-hydroxy-4-carboxy-5-ureidoimidazoline (OHCU). The sequence is that of 5-hydroxyisourate hydrolase from Deinococcus radiodurans (strain ATCC 13939 / DSM 20539 / JCM 16871 / CCUG 27074 / LMG 4051 / NBRC 15346 / NCIMB 9279 / VKM B-1422 / R1).